Consider the following 299-residue polypeptide: Biphenyl-2,3-diol 1,2-dioxygenase (299 aa).

VOC domains lie at 6–121 (ELGY…IFYG) and 146–267 (GIGH…FGWG). Positions 149, 212, and 263 each coordinate Fe cation.

This sequence belongs to the extradiol ring-cleavage dioxygenase family. Homooctamer. It depends on Fe(2+) as a cofactor.

The enzyme catalyses biphenyl-2,3-diol + O2 = 2-hydroxy-6-oxo-6-phenylhexa-2,4-dienoate + H(+). It functions in the pathway xenobiotic degradation; biphenyl degradation; 2-hydroxy-2,4-pentadienoate and benzoate from biphenyl: step 3/4. The sequence is that of Biphenyl-2,3-diol 1,2-dioxygenase (bphC) from Sphingomonas paucimobilis (Pseudomonas paucimobilis).